A 356-amino-acid polypeptide reads, in one-letter code: Terpene synthase 10 (356 aa).

The short motif at 90 to 95 (DDYLDS) is the DDxx(x)D/E motif element. An NDxxSxxxD/E motif motif is present at residues 232–240 (NDAVSYAKE).

The protein belongs to the terpene synthase family.

It carries out the reaction geranylgeranyl diphosphate = beta-araneosene + diphosphate. In terms of biological role, terpene synthase that converts its substrate farnesyl diphosphate (FPP) into several unidentified sesquiterpenes. TPS10 also converts geranylgeranyl diphosphate (GGPP) into the diterpene beta-araneosene. In Dictyostelium purpureum (Slime mold), this protein is Terpene synthase 10.